Reading from the N-terminus, the 274-residue chain is Cytochrome b-c1 complex subunit Rieske, mitochondrial (274 aa).

Residues 79-103 are Mitochondrial matrix-facing; sequence SHTDVRVPDFSEYRRLEVLDSTKSS. A helical membrane pass occupies residues 104-140; it reads RESSEARKGFSYLVTGVTTVGVAYAAKNVVTQFVSSM. Topologically, residues 141–274 are mitochondrial intermembrane; that stretch reads SASADVLALA…FTSDDMVIVG (134 aa). In terms of domain architecture, Rieske spans 187–272; it reads EAAVELSQLR…YEFTSDDMVI (86 aa). Residues Cys-217, His-219, Cys-236, His-239, and Ser-241 each contribute to the [2Fe-2S] cluster site. An intrachain disulfide couples Cys-222 to Cys-238.

This sequence belongs to the Rieske iron-sulfur protein family. In terms of assembly, component of the ubiquinol-cytochrome c oxidoreductase (cytochrome b-c1 complex, complex III, CIII), a multisubunit enzyme composed of 11 subunits. The complex is composed of 3 respiratory subunits cytochrome b, cytochrome c1 and Rieske protein UQCRFS1, 2 core protein subunits UQCRC1/QCR1 and UQCRC2/QCR2, and 6 low-molecular weight protein subunits UQCRH/QCR6, UQCRB/QCR7, UQCRQ/QCR8, UQCR10/QCR9, UQCR11/QCR10 and subunit 9, the cleavage product of Rieske protein UQCRFS1. The complex exists as an obligatory dimer and forms supercomplexes (SCs) in the inner mitochondrial membrane with NADH-ubiquinone oxidoreductase (complex I, CI) and cytochrome c oxidase (complex IV, CIV), resulting in different assemblies (supercomplex SCI(1)III(2)IV(1) and megacomplex MCI(2)III(2)IV(2)). Incorporation of the Rieske protein UQCRFS1 is the penultimate step in complex III assembly. Interacts with TTC19, which is involved in the clearance of UQCRFS1 fragments. As to quaternary structure, component of the ubiquinol-cytochrome c oxidoreductase (cytochrome b-c1 complex, complex III, CIII). Subunit 9 corresponds to the mitochondrial targeting sequence (MTS) of Rieske protein UQCRFS1. It is retained after processing and incorporated inside complex III, where it remains bound to the complex and localizes between the 2 core subunits UQCRC1/QCR1 and UQCRC2/QCR2. [2Fe-2S] cluster serves as cofactor. In terms of processing, proteolytic processing is necessary for the correct insertion of UQCRFS1 in the complex III dimer. Several fragments are generated during UQCRFS1 insertion, most probably due to the endogenous matrix-processing peptidase (MPP) activity of the 2 core protein subunits UQCRC1/QCR1 and UQCRC2/QCR2, which are homologous to the 2 mitochondrial-processing peptidase (MPP) subunits beta-MPP and alpha-MPP respectively. The action of the protease is also necessary for the clearance of the UQCRFS1 fragments.

Its subcellular location is the mitochondrion inner membrane. It catalyses the reaction a quinol + 2 Fe(III)-[cytochrome c](out) = a quinone + 2 Fe(II)-[cytochrome c](out) + 2 H(+)(out). Component of the ubiquinol-cytochrome c oxidoreductase, a multisubunit transmembrane complex that is part of the mitochondrial electron transport chain which drives oxidative phosphorylation. The respiratory chain contains 3 multisubunit complexes succinate dehydrogenase (complex II, CII), ubiquinol-cytochrome c oxidoreductase (cytochrome b-c1 complex, complex III, CIII) and cytochrome c oxidase (complex IV, CIV), that cooperate to transfer electrons derived from NADH and succinate to molecular oxygen, creating an electrochemical gradient over the inner membrane that drives transmembrane transport and the ATP synthase. The cytochrome b-c1 complex catalyzes electron transfer from ubiquinol to cytochrome c, linking this redox reaction to translocation of protons across the mitochondrial inner membrane, with protons being carried across the membrane as hydrogens on the quinol. In the process called Q cycle, 2 protons are consumed from the matrix, 4 protons are released into the intermembrane space and 2 electrons are passed to cytochrome c. The Rieske protein is a catalytic core subunit containing a [2Fe-2S] iron-sulfur cluster. It cycles between 2 conformational states during catalysis to transfer electrons from the quinol bound in the Q(0) site in cytochrome b to cytochrome c1. Incorporation of UQCRFS1 is the penultimate step in complex III assembly. Its function is as follows. Component of the ubiquinol-cytochrome c oxidoreductase (cytochrome b-c1 complex, complex III, CIII). UQCRFS1 undergoes proteolytic processing once it is incorporated in the complex III dimer. One of the fragments, called subunit 9, corresponds to its mitochondrial targeting sequence (MTS). The proteolytic processing is necessary for the correct insertion of UQCRFS1 in the complex III dimer, but the persistence of UQCRFS1-derived fragments may prevent newly imported UQCRFS1 to be processed and assembled into complex III and is detrimental for the complex III structure and function. The protein is Cytochrome b-c1 complex subunit Rieske, mitochondrial (UQCRFS1) of Pongo pygmaeus (Bornean orangutan).